The primary structure comprises 332 residues: MHIAVIGAGINGISVAVNLLETLPGVKVTIFTHNVTPNTTGDVAAGLFRPYLVAEGDHRIKKWCRSTYNFLENFIATNPKHHKYGCCYLEVFELDTEPLEKTLFNEIVGNSRFLNEFELKRYPTAKYGLASTSIISEGKKILPYFYEKFKMLGGKIKVMQVKNFDEVQMIHNFPIVINCSGLGSRSLCNDMDIYPVRGQIIRIHAPWIKYSFNKAEHYIIPQSDGVVVLGGTTQENNWNTLPDENDTKNILNGCKTILNGLEECNILSVNVGLRPGRKSVRLEKENRTNFTTGNKYTIIHNYGHGGSGFTLFWGCAKDVGQLVSDILLKAKL.

Residues Ala-8, Gly-9, Ile-10, Thr-39, Thr-40, Ala-45, Gly-46, Leu-47, Val-161, and Ser-180 each contribute to the FAD site. Tyr-218 and Arg-274 together coordinate D-proline. 2 residues coordinate D-serine: Tyr-218 and Arg-274. The FAD site is built by Arg-274, Gly-305, Gly-306, Gly-308, and Thr-310. Position 306 (Gly-306) interacts with D-proline. Gly-306 is a binding site for D-serine. Residues 330–332 (AKL) carry the Microbody targeting signal motif.

Belongs to the DAMOX/DASOX family. The cofactor is FAD.

Its subcellular location is the peroxisome matrix. It carries out the reaction a D-alpha-amino acid + O2 + H2O = a 2-oxocarboxylate + H2O2 + NH4(+). It catalyses the reaction D-alanine + O2 + H2O = pyruvate + H2O2 + NH4(+). The catalysed reaction is D-arginine + O2 + H2O = 5-guanidino-2-oxopentanoate + H2O2 + NH4(+). The enzyme catalyses D-asparagine + O2 + H2O = 2-oxosuccinamate + H2O2 + NH4(+). It carries out the reaction D-cysteine + O2 + H2O = 2-oxo-3-sulfanylpropanoate + H2O2 + NH4(+). It catalyses the reaction D-glutamine + O2 + H2O = 2-oxoglutaramate + H2O2 + NH4(+). The catalysed reaction is D-isoleucine + O2 + H2O = (R)-3-methyl-2-oxopentanoate + H2O2 + NH4(+). The enzyme catalyses D-leucine + O2 + H2O = 4-methyl-2-oxopentanoate + H2O2 + NH4(+). It carries out the reaction D-lysine + O2 + H2O = 6-amino-2-oxohexanoate + H2O2 + NH4(+). It catalyses the reaction D-methionine + O2 + H2O = 4-methylsulfanyl-2-oxobutanoate + H2O2 + NH4(+). The catalysed reaction is D-phenylalanine + O2 + H2O = 3-phenylpyruvate + H2O2 + NH4(+). The enzyme catalyses D-proline + O2 = 1-pyrroline-2-carboxylate + H2O2. It carries out the reaction D-valine + O2 + H2O = 3-methyl-2-oxobutanoate + H2O2 + NH4(+). It catalyses the reaction D-histidine + O2 + H2O = 3-(imidazol-5-yl)pyruvate + H2O2 + NH4(+). The catalysed reaction is D-tyrosine + O2 + H2O = 3-(4-hydroxyphenyl)pyruvate + H2O2 + NH4(+). The enzyme catalyses D-serine + O2 + H2O = 3-hydroxypyruvate + H2O2 + NH4(+). It carries out the reaction D-threonine + O2 + H2O = (S)-3-hydroxy-2-oxobutanoate + H2O2 + NH4(+). It catalyses the reaction D-tryptophan + O2 + H2O = indole-3-pyruvate + H2O2 + NH4(+). In terms of biological role, catalyzes the oxidative deamination of D-amino acids with broad substrate specificity. Could be responsible for the degradation of diet-derived D-alanine in the intestine. Maintains the asexual state of worms and represses early ovarian development. Following sexual induction, the enzyme is required for differentiation of oogonia into oocytes in the developing ovaries. In Dugesia ryukyuensis (Freshwater planarian flatworm), this protein is D-amino acid oxidase.